We begin with the raw amino-acid sequence, 184 residues long: Phosducin-like protein 3 (184 aa).

Residues 45–184 (HGELKEIDEQ…VKNNKFKEDD (140 aa)) are thioredoxin fold.

It belongs to the phosducin family.

The polypeptide is Phosducin-like protein 3 (phlp3) (Dictyostelium discoideum (Social amoeba)).